Consider the following 29-residue polypeptide: Cytochrome b6-f complex subunit 8 (29 aa).

Residues 3–23 (IDVLGWVALLVVFTWSIAMVV) form a helical membrane-spanning segment.

Belongs to the PetN family. In terms of assembly, the 4 large subunits of the cytochrome b6-f complex are cytochrome b6, subunit IV (17 kDa polypeptide, PetD), cytochrome f and the Rieske protein, while the 4 small subunits are PetG, PetL, PetM and PetN. The complex functions as a dimer.

It localises to the cellular thylakoid membrane. Component of the cytochrome b6-f complex, which mediates electron transfer between photosystem II (PSII) and photosystem I (PSI), cyclic electron flow around PSI, and state transitions. This is Cytochrome b6-f complex subunit 8 from Mastigocladus laminosus (Fischerella sp.).